The following is a 391-amino-acid chain: MTLVAITYTRGSLHILNQLLLPHQTTYDPLHSARDAWHAIHEMRVRGAPAIAIVAALSLAVELHTLATSNQLSAEPKDVGQLILEKLEFLVSSRPTAVNLAEAAGRLGRIVNGRAQVQGVGGNEVAEAYIEAAERMLDDDVRDNRAIGESGAKWVLEHAITKGSISGTGQAKVAVLTHCNTGSLATAGYGTALGVIRSLHATGSLERAYCTETRPYNQGSRLTAFELVHDNIPATLITDSMAAALLARQSAGPAQSVGVSAIIVGADRVAANGDTANKIGTYGLAVLAKYHGVKFLVAAPRTTIDMNTKTGADIVIEERPEKEVTRIRGPRDGEEGNGLGAMETITVAADGIGVWNPAFDVTPAALVDGIITEVGVVEKDGSGVFHLERIF.

Residue Asp-267 is the Proton donor of the active site.

The protein belongs to the eIF-2B alpha/beta/delta subunits family. MtnA subfamily.

The protein resides in the cytoplasm. It localises to the nucleus. The enzyme catalyses 5-(methylsulfanyl)-alpha-D-ribose 1-phosphate = 5-(methylsulfanyl)-D-ribulose 1-phosphate. The protein operates within amino-acid biosynthesis; L-methionine biosynthesis via salvage pathway; L-methionine from S-methyl-5-thio-alpha-D-ribose 1-phosphate: step 1/6. Its function is as follows. Catalyzes the interconversion of methylthioribose-1-phosphate (MTR-1-P) into methylthioribulose-1-phosphate (MTRu-1-P). The protein is Methylthioribose-1-phosphate isomerase of Ajellomyces capsulatus (strain NAm1 / WU24) (Darling's disease fungus).